The sequence spans 138 residues: Small ribosomal subunit protein uS11c (138 aa).

The interval 1 to 23 (MAKPILRIGSRKNTRSSSRKNVR) is disordered. Basic residues predominate over residues 9-23 (GSRKNTRSSSRKNVR).

Belongs to the universal ribosomal protein uS11 family. In terms of assembly, part of the 30S ribosomal subunit.

The protein localises to the plastid. It localises to the chloroplast. This is Small ribosomal subunit protein uS11c from Nasturtium officinale (Watercress).